A 137-amino-acid polypeptide reads, in one-letter code: MIWKRHMTLEALNATSVGTMVEHLGIVYTRLGDDLLEATMPVDTRTHQPFGLLHGGASAALAETLGSMAGYLTTRDGQCVVGTEISASHHRAVSQGQVRGVCQPLHLGRQSQCWEIVIYDEQGRRCCTSRLSTAILG.

Glutamate 63 acts as the Nucleophile or proton acceptor in catalysis.

This sequence belongs to the thioesterase PaaI family. As to quaternary structure, homotetramer. Dimer of dimers. Interacts specifically with the aryl carrier protein (ArCP) domain of EntB.

The protein resides in the cytoplasm. The protein operates within siderophore biosynthesis; enterobactin biosynthesis. In terms of biological role, required for optimal enterobactin synthesis. Acts as a proofreading enzyme that prevents EntB misacylation by hydrolyzing the thioester bound existing between EntB and wrongly charged molecules. The sequence is that of Proofreading thioesterase EntH from Cronobacter sakazakii (strain ATCC BAA-894) (Enterobacter sakazakii).